Reading from the N-terminus, the 1320-residue chain is Clustered mitochondria protein homolog (1320 aa).

3 disordered regions span residues 166–241 (QQLE…KQKM), 552–582 (YGSM…TKSI), and 683–708 (LKEK…EDVQ). Positions 185-194 (TEDKEEKETI) are enriched in basic and acidic residues. The span at 202 to 213 (KKNKHHNKKGNK) shows a compositional bias: basic residues. Composition is skewed to basic and acidic residues over residues 226–241 (NEEK…KQKM), 565–575 (QQQKEENEENK), and 683–695 (LKEK…KEGI). Residues 379-649 (KTNRYDINKG…KATPRDPNYT (271 aa)) enclose the Clu domain. TPR repeat units lie at residues 955-988 (GLDL…YHQV), 997-1030 (GACF…TEKT), 1039-1072 (VQAY…TDLL), 1081-1114 (ASIY…QEFL), and 1123-1156 (STTY…LEKE). Residues 1204–1320 (KADQFKKSQP…SKPNKKSSKN (117 aa)) form a disordered region. The span at 1237–1247 (KPKKSQSKKSK) shows a compositional bias: basic residues. A compositionally biased stretch (low complexity) spans 1248–1311 (STNTTTTTNT…PTSSSAADSS (64 aa)).

Belongs to the CLU family.

It localises to the cytoplasm. In terms of biological role, mRNA-binding protein involved in proper cytoplasmic distribution of mitochondria. The sequence is that of Clustered mitochondria protein homolog from Dictyostelium discoideum (Social amoeba).